The sequence spans 1940 residues: Myosin-2 (1940 aa).

A Myosin N-terminal SH3-like domain is found at 33 to 82 (DAKTSVFVAEPKESFVKGTVQSREGGKVTVKTEAGATLTVKEDQVFPMNP). Phosphothreonine occurs at positions 64 and 69. Residues 86–783 (DKIEDMAMMT…LLGLLEEMRD (698 aa)) form the Myosin motor domain. K130 bears the N6,N6,N6-trimethyllysine mark. 179–186 (GESGAGKT) provides a ligand contact to ATP. Phosphotyrosine is present on Y389. S392 carries the post-translational modification Phosphoserine. T419 carries the phosphothreonine modification. S625 carries the phosphoserine modification. Residues 660–682 (LNKLMTNLRSTHPHFVRCIIPNE) form an actin-binding region. H758 bears the Pros-methylhistidine mark. The tract at residues 762 to 776 (KFGHTKVFFKAGLLG) is actin-binding. The region spanning 786-815 (LAQLITRTQARCRGFLARVEYQKMVERRES) is the IQ domain. Positions 844 to 1940 (LLKSAETEKE…EVHTKVISEE (1097 aa)) form a coiled coil. A phosphoserine mark is found at S1093, S1097, S1163, and S1238. The interval 1154–1173 (RLEEAGGATSAQIEMNKKRE) is disordered. T1242 carries the phosphothreonine modification. S1244 bears the Phosphoserine mark. At T1256 the chain carries Phosphothreonine. S1262 is modified (phosphoserine). At T1287 the chain carries Phosphothreonine. 4 positions are modified to phosphoserine: S1289, S1293, S1304, and S1307. Y1465 is modified (phosphotyrosine). The residue at position 1468 (T1468) is a Phosphothreonine. A Phosphoserine modification is found at S1475. Y1493 carries the phosphotyrosine modification. Position 1496 is a phosphoserine (S1496). Residue T1502 is modified to Phosphothreonine. S1515 is subject to Phosphoserine. T1518 is subject to Phosphothreonine. S1543, S1555, S1575, S1601, S1715, and S1727 each carry phosphoserine. Phosphothreonine occurs at positions 1731 and 1737. Position 1740 is a phosphoserine (S1740). The tract at residues 1884-1920 (KRQAEEAEEQSNTNLSKFRKLQHELEEAEERADIAES) is disordered.

The protein belongs to the TRAFAC class myosin-kinesin ATPase superfamily. Myosin family. In terms of assembly, muscle myosin is a hexameric protein that consists of 2 heavy chain subunits (MHC), 2 alkali light chain subunits (MLC) and 2 regulatory light chain subunits (MLC-2). Interacts with GCSAM.

The protein resides in the cytoplasm. The protein localises to the myofibril. Its function is as follows. Myosins are actin-based motor molecules with ATPase activity essential for muscle contraction. The protein is Myosin-2 (MYH2) of Canis lupus familiaris (Dog).